We begin with the raw amino-acid sequence, 440 residues long: D-serine dehydratase (440 aa).

N6-(pyridoxal phosphate)lysine is present on Lys-116.

This sequence belongs to the serine/threonine dehydratase family. DsdA subfamily. In terms of assembly, monomer. Requires pyridoxal 5'-phosphate as cofactor.

It carries out the reaction D-serine = pyruvate + NH4(+). The chain is D-serine dehydratase from Salmonella paratyphi A (strain ATCC 9150 / SARB42).